The primary structure comprises 309 residues: Dermonecrotic toxin LarSicTox-alphaIB2bi (309 aa).

Residue Val1 is a signal peptide. Positions 2 to 27 (RATEKFAPIYFFCHPLQSAETDVAER) are excised as a propeptide. The active site involves His38. Glu58 and Asp60 together coordinate Mg(2+). Catalysis depends on His74, which acts as the Nucleophile. Intrachain disulfides connect Cys78–Cys84 and Cys80–Cys223. Asp118 is a Mg(2+) binding site. A glycan (N-linked (GlcNAc...) asparagine) is linked at Asn286.

Belongs to the arthropod phospholipase D family. Class II subfamily. The cofactor is Mg(2+). In terms of tissue distribution, expressed by the venom gland.

Its subcellular location is the secreted. The enzyme catalyses an N-(acyl)-sphingosylphosphocholine = an N-(acyl)-sphingosyl-1,3-cyclic phosphate + choline. It catalyses the reaction N-hexanoyl-sphing-4-enine-1-phosphocholine = N-(hexanoyl)-sphing-4-enine-1,3-cyclic phosphate + choline. It carries out the reaction N-(dodecanoyl)-sphing-4-enine-1-phosphocholine = N-dodecanoyl-sphing-4-enine-1,3-cyclic phosphate + choline. The catalysed reaction is a 1-acyl-sn-glycero-3-phosphocholine = a 1-acyl-sn-glycero-2,3-cyclic phosphate + choline. The enzyme catalyses 1-tetradecanoyl-sn-glycero-3-phosphocholine = 1-tetradecanoyl-sn-glycero-2,3-cyclic phosphate + choline. It catalyses the reaction 1-octanoyl-sn-glycero-3-phosphocholine = 1-octanoyl-sn-glycero-2,3-cyclic phosphate + choline. It carries out the reaction 1-hexadecanoyl-sn-glycero-3-phosphocholine = 1-hexadecanoyl-sn-glycero-2,3-cyclic phosphate + choline. The catalysed reaction is an N-(acyl)-sphingosylphosphoethanolamine = an N-(acyl)-sphingosyl-1,3-cyclic phosphate + ethanolamine. The enzyme catalyses N-dodecanoyl-heptadecasphing-4-enine-1-phosphoethanolamine = N-dodecanoyl-heptadecasphing-4-enine-1,3-cyclic phosphate + ethanolamine. Functionally, dermonecrotic toxins cleave the phosphodiester linkage between the phosphate and headgroup of certain phospholipids (sphingolipid and lysolipid substrates), forming an alcohol (often choline) and a cyclic phosphate. This toxin acts on sphingomyelin (SM) with high activity and on lysophosphatidylcholine (LPC) and ceramide phosphoethanolamine (CPE) with low activity. In vivo, shows potent insecticidal activities. On mammals, induces dermonecrosis, hemolysis, increased vascular permeability, edema, inflammatory response, and platelet aggregation. The protein is Dermonecrotic toxin LarSicTox-alphaIB2bi of Loxosceles arizonica (Arizona brown spider).